We begin with the raw amino-acid sequence, 201 residues long: MAEKFIKHTGLVVPLDAANVDTDAIIPKQFLQKVTRTGFGAHLFNDWRFLDEKGQQPNPDFVLNFSQYQGASILLARENFGCGSSREHAPWALTDYGFKVVIAPSFADIFYGNSFNNQLLPVKLSDAEVDELFALVKANPGIHFDVDLEAQEVKAGEKTYRFTIDAFRRHCMMNGLDSIGLTLQHDDAIAAYEAKQPAFMR.

Belongs to the LeuD family. LeuD type 1 subfamily. Heterodimer of LeuC and LeuD.

The catalysed reaction is (2R,3S)-3-isopropylmalate = (2S)-2-isopropylmalate. The protein operates within amino-acid biosynthesis; L-leucine biosynthesis; L-leucine from 3-methyl-2-oxobutanoate: step 2/4. Catalyzes the isomerization between 2-isopropylmalate and 3-isopropylmalate, via the formation of 2-isopropylmaleate. This is 3-isopropylmalate dehydratase small subunit from Escherichia coli O157:H7.